A 329-amino-acid polypeptide reads, in one-letter code: Diaminopimelate epimerase (329 aa).

The substrate site is built by N14 and N73. C82 serves as the catalytic Proton donor. Substrate is bound by residues G83–N84, N170, N206, and E224–R225. C233 functions as the Proton acceptor in the catalytic mechanism. Position 234 to 235 (G234 to T235) interacts with substrate.

Belongs to the diaminopimelate epimerase family. Homodimer.

It localises to the cytoplasm. The enzyme catalyses (2S,6S)-2,6-diaminopimelate = meso-2,6-diaminopimelate. It participates in amino-acid biosynthesis; L-lysine biosynthesis via DAP pathway; DL-2,6-diaminopimelate from LL-2,6-diaminopimelate: step 1/1. In terms of biological role, catalyzes the stereoinversion of LL-2,6-diaminopimelate (L,L-DAP) to meso-diaminopimelate (meso-DAP), a precursor of L-lysine and an essential component of the bacterial peptidoglycan. This chain is Diaminopimelate epimerase, found in Listeria monocytogenes serovar 1/2a (strain ATCC BAA-679 / EGD-e).